We begin with the raw amino-acid sequence, 316 residues long: Transaldolase (316 aa).

Residue Lys132 is the Schiff-base intermediate with substrate of the active site.

Belongs to the transaldolase family. Type 1 subfamily. Homodimer.

The protein localises to the cytoplasm. It catalyses the reaction D-sedoheptulose 7-phosphate + D-glyceraldehyde 3-phosphate = D-erythrose 4-phosphate + beta-D-fructose 6-phosphate. The protein operates within carbohydrate degradation; pentose phosphate pathway; D-glyceraldehyde 3-phosphate and beta-D-fructose 6-phosphate from D-ribose 5-phosphate and D-xylulose 5-phosphate (non-oxidative stage): step 2/3. Its function is as follows. Transaldolase is important for the balance of metabolites in the pentose-phosphate pathway. The sequence is that of Transaldolase from Aliivibrio fischeri (strain MJ11) (Vibrio fischeri).